Consider the following 528-residue polypeptide: Nucleolar GTP-binding protein 1 (528 aa).

The region spanning 168-335 (RTLLVCGFPN…VKAMACDLLL (168 aa)) is the OBG-type G domain. GTP contacts are provided by residues 174-181 (GFPNVGKS), 220-224 (DTPGI), and 287-290 (SKSD). The disordered stretch occupies residues 470–528 (PDSWKHRSRNSGGDIAVHVRRDSKTQVAQPPRLPSKKKARFDDKHYYDRKPKHLYRGRK). Basic and acidic residues predominate over residues 509–518 (RFDDKHYYDR). Basic residues predominate over residues 519–528 (KPKHLYRGRK).

Belongs to the TRAFAC class OBG-HflX-like GTPase superfamily. OBG GTPase family. NOG subfamily.

The protein localises to the nucleus. Its subcellular location is the nucleolus. In terms of biological role, involved in the biogenesis of the 60S ribosomal subunit. This is Nucleolar GTP-binding protein 1 (NOG1) from Encephalitozoon cuniculi (strain GB-M1) (Microsporidian parasite).